A 431-amino-acid polypeptide reads, in one-letter code: Argininosuccinate lyase (431 aa).

Belongs to the lyase 1 family. Argininosuccinate lyase subfamily.

The protein resides in the cytoplasm. It catalyses the reaction 2-(N(omega)-L-arginino)succinate = fumarate + L-arginine. It participates in amino-acid biosynthesis; L-arginine biosynthesis; L-arginine from L-ornithine and carbamoyl phosphate: step 3/3. The chain is Argininosuccinate lyase from Xanthomonas oryzae pv. oryzae (strain MAFF 311018).